The following is a 261-amino-acid chain: Small ribosomal subunit protein uS2 (261 aa).

Belongs to the universal ribosomal protein uS2 family.

The protein is Small ribosomal subunit protein uS2 of Streptococcus mutans serotype c (strain ATCC 700610 / UA159).